A 136-amino-acid chain; its full sequence is Small ribosomal subunit protein eS8 (136 aa).

The interval Met1 to Val23 is disordered. Basic residues predominate over residues Thr13 to Val23.

The protein belongs to the eukaryotic ribosomal protein eS8 family. Part of the 30S ribosomal subunit.

The chain is Small ribosomal subunit protein eS8 from Hyperthermus butylicus (strain DSM 5456 / JCM 9403 / PLM1-5).